The following is a 1046-amino-acid chain: Multidrug resistance protein MexB (1046 aa).

Over 1–9 (MSKFFIDRP) the chain is Cytoplasmic. The helical transmembrane segment at 10–28 (IFAWVIALVIMLAGGLSIL) threads the bilayer. The Periplasmic segment spans residues 29–339 (SLPVNQYPAI…TPVVSASIHE (311 aa)). The helical transmembrane segment at 340–359 (VVKTLGEAILLVFLVMYLFL) threads the bilayer. Residues 360–365 (QNFRAT) lie on the Cytoplasmic side of the membrane. The chain crosses the membrane as a helical span at residues 366-385 (LIPTIAVPVVLLGTFGVLAA). At 386–391 (FGFSIN) the chain is on the periplasmic side. Residues 392–413 (TLTMFGMVLAIGLLVDDAIVVV) form a helical membrane-spanning segment. The Cytoplasmic portion of the chain corresponds to 414-441 (ENVERVMAEEGLSPREAARKSMGQIQGA). Residues 442–460 (LVGIAMVLSAVFLPMAFFG) traverse the membrane as a helical segment. The Periplasmic portion of the chain corresponds to 461–473 (GSTGVIYRQFSIT). The helical transmembrane segment at 474–496 (IVSAMALSVIVALILTPALCATM) threads the bilayer. Residues 497–538 (LKPIEKGDHGEHKGGFFGWFNRMFLSTTHGYERGVASILKHR) are Cytoplasmic-facing. Residues 539 to 557 (APYLLIYVVIVAGMIWMFT) form a helical membrane-spanning segment. Over 558–871 (RIPTAFLPDE…SYEERLSGSQ (314 aa)) the chain is Periplasmic. A helical transmembrane segment spans residues 872–891 (APALYALSLLVVFLCLAALY). Residues 892-897 (ESWSIP) lie on the Cytoplasmic side of the membrane. The helical transmembrane segment at 898 to 917 (FSVMLVVPLGVIGALLATSM) threads the bilayer. Residues 918 to 923 (RGLSND) are Periplasmic-facing. The helical transmembrane segment at 924–945 (VFFQVGLLTTIGLSAKNAILIV) threads the bilayer. At 946–972 (EFAKELHEQGKGIVEAAIEACRMRLRP) the chain is on the cytoplasmic side. Residues 973–991 (IVMTSLAFILGVVPLAIST) form a helical membrane-spanning segment. The Periplasmic segment spans residues 992-1004 (GAGSGSQHAIGTG). Residues 1005–1027 (VIGGMVTATVLAIFWVPLFYVAV) form a helical membrane-spanning segment. Residues 1028 to 1046 (STLFKDEASKQQASVEKGQ) lie on the Cytoplasmic side of the membrane.

It belongs to the resistance-nodulation-cell division (RND) (TC 2.A.6) family. In terms of assembly, component of the MexAB-OprM multidrug efflux complex, composed of six MexA subunits forming a hexameric tube, binding to a MexB trimer, which interact with the trimeric OprM outer membrane channel protein. OprM is thought to not directly contact MexB; instead, MexA joins MexB and OprM by forming a funnel-like hexamer anchored to the inner membrane. MexA may initially form a hexameric ring complex with MexB prior to OprM, then OprM undergoes a conformational change as it contacts MexA, allowing the periplasmic gate to open. It is thought that, under high intracellular substrate concentration, MexB ejects substrate into the tunnel formed by MexA-OprM; as the substrate level declines, conformational changes in MexB cause efflux to reduce and stop and the complex shifts to the closed state. Acts as a substrate:proton antiporter and activity is enhanced significantly when in complex with MexA and OprM, in vitro.

The protein localises to the cell inner membrane. Its activity is regulated as follows. Export of antibiotics and solvents is dramatically decreased in the presence of the protonophore carbonyl cyanide m-chlorophenylhydrazone (CCCP), therefore may be driven by a proton gradient. Antibiotic efflux is inhibited by pyridopyrimidine derivatives, such as ABI-PP, acting by binding to a hydrophobic pocket in MexB. The inner membrane transporter component of the MexAB-OprM efflux system that confers multidrug resistance. Functions as the major efflux pump for n-hexane and p-xylene efflux. Has been shown in one study to be involved in the active efflux of the autoinducer N-(3-oxododecanoyl) homoserine lactone, thereby playing an indirect role in quorum-sensing; but has been shown in another study not to be involved in efflux of this autoinducer. Over-expression of the pump increases antibiotic and solvent efflux capacities. Implicated in the secretion of the siderophore pyoverdine. In Pseudomonas aeruginosa (strain ATCC 15692 / DSM 22644 / CIP 104116 / JCM 14847 / LMG 12228 / 1C / PRS 101 / PAO1), this protein is Multidrug resistance protein MexB (mexB).